Here is a 636-residue protein sequence, read N- to C-terminus: Protein meg-1 (636 aa).

Polar residues-rich tracts occupy residues 1–13 (MDNRGHFSSNGNF), 38–54 (SSGNMRSIGGSAQNQQQ), and 292–355 (LSMN…QYNH). Disordered stretches follow at residues 1-54 (MDNR…NQQQ), 289-367 (LFNL…APHL), 484-504 (SDVAREDASTSQPSKSRSMYI), and 521-542 (LDSSQSHAGPVPAASTKPKTPS). Serine 574 bears the Phosphoserine; by mbk-2 mark. The disordered stretch occupies residues 591–636 (MSQSFLHQQDDEAPDCTKNVHSESDLKQAEPQESDKQSDKELPSNE). Over residues 608-636 (KNVHSESDLKQAEPQESDKQSDKELPSNE) the composition is skewed to basic and acidic residues.

Interacts with pptr-1, pptr-2 and pgl-1. In terms of processing, phosphorylated by mbk-2, which promotes the disassembly of zygotic P granules in the anterior cytoplasm of pre-gastrulation embryos. Dephosphorylated by a phosphatase complex containing the PP2A regulatory subunit pptr-1, which promotes the assembly and accumulation of zygotic P granules in the posterior cytoplasm of pre-gastrulation embryos. Not expressed in the adult germline or in any somatic tissues.

Its subcellular location is the cytoplasmic granule. Functionally, p granule component, which acts redundantly with P granule component meg-2 to promote P granule segregation during embryogenesis, and germ cell proliferation and differentiation in larval stages. In its phosphorylated form, and together with meg-2, promotes the disassembly of zygotic P granules in the anterior cytoplasm of pre-gastrulation embryos. In its dephosphorylated form, and together with meg-2, promotes the assembly and accumulation of zygotic P granules in the posterior cytoplasm of pre-gastrulation embryos. May function with the nanos family members nos-2 and nos-3 to promote germ cell proliferation during larval development. Required for fertility. This chain is Protein meg-1, found in Caenorhabditis elegans.